The chain runs to 289 residues: 4-hydroxy-tetrahydrodipicolinate synthase (289 aa).

Pyruvate is bound at residue T43. Y131 acts as the Proton donor/acceptor in catalysis. The Schiff-base intermediate with substrate role is filled by K160. Residue V200 participates in pyruvate binding.

This sequence belongs to the DapA family. As to quaternary structure, homotetramer; dimer of dimers.

It localises to the cytoplasm. It carries out the reaction L-aspartate 4-semialdehyde + pyruvate = (2S,4S)-4-hydroxy-2,3,4,5-tetrahydrodipicolinate + H2O + H(+). Its pathway is amino-acid biosynthesis; L-lysine biosynthesis via DAP pathway; (S)-tetrahydrodipicolinate from L-aspartate: step 3/4. Catalyzes the condensation of (S)-aspartate-beta-semialdehyde [(S)-ASA] and pyruvate to 4-hydroxy-tetrahydrodipicolinate (HTPA). The protein is 4-hydroxy-tetrahydrodipicolinate synthase of Methanococcus maripaludis (strain C7 / ATCC BAA-1331).